The sequence spans 771 residues: MGLPPLEFSDCYLDSPQFRERLKSHETELDKTNKFIKELIKDGKSLVAAHKSLSFAKRKFAGSLNEFKFRCIGDAETDDEICIARSLQEFAAVLGNLEDERIRMIDNAGEVLITPLEKFRKEQISAAKEVKKKYDKETEKYCGMLEKHMNLSSKKKEVLLHEADVQLDQMRQHFYEVSLEYVLKVHEVQERKMFEFVEPLLAFLQGLFTFYHHGYELAKDFSDFKTQLSISIQNTRDRFEGTRSEVESLMKKMKENPHEHLALSPFTMEGYLYVQEKRHFGTSWVKHYCTYQRETKQMTMVPFDQKSGGKVGEEELVQLKSCIRRKTESIEKRFCFDVEGVDRPTVLTMQALSEEDRKLWMEAMDGREPVYNSNKDSQSEGTAQLDNIGFSIIRKCIQAIETRGINEQGLYRIVGVNSRVQKLLNILMDPKISPETETEIPSEWEIKTITSSLKTYLRMLPGPLMTYQFQRSFIKAAKQESQESRIKEIHCLIHRLPEKNRQMLHLLMTHLANVAAHHKQNLMTVANLGVVFGPTLLRPQEETVAAIMDIKFQNIVVEIIIENYEEMFSTVPEMPQTNSQLHLSRKRSTDSKPPSCSERPLTLFHTSHSSEKEEKRNSVNSSAESVSSSNANSSVNSTCTQRSNMNNLNASDPDLDVAKVSRPNSLLNPKNISGLLPSSLNPSPTSPPTCPMVSAPSSPMPTSSTSSDSSPVSVPRKAKALYACKAEHDSELSFSAGTVFENVCPSQEPGWLEGTLNGKTGLIPENYVEFL.

In terms of domain architecture, BAR spans 7–262 (EFSDCYLDSP…MKENPHEHLA (256 aa)). In terms of domain architecture, PH spans 265–369 (PFTMEGYLYV…WMEAMDGREP (105 aa)). A Rho-GAP domain is found at 383-568 (AQLDNIGFSI…IIIENYEEMF (186 aa)). A disordered region spans residues 575-712 (PQTNSQLHLS…SSTSSDSSPV (138 aa)). A compositionally biased stretch (basic and acidic residues) spans 608–617 (HSSEKEEKRN). Low complexity predominate over residues 618–637 (SVNSSAESVSSSNANSSVNS). 2 stretches are compositionally biased toward polar residues: residues 638–650 (TCTQ…NLNA) and 662–671 (RPNSLLNPKN). 2 stretches are compositionally biased toward low complexity: residues 673 to 683 (SGLLPSSLNPS) and 691 to 712 (PMVS…SSPV). Residues 713 to 771 (SVPRKAKALYACKAEHDSELSFSAGTVFENVCPSQEPGWLEGTLNGKTGLIPENYVEFL) enclose the SH3 domain.

It is found in the cell junction. Its subcellular location is the focal adhesion. The protein resides in the cytoplasm. It localises to the cytoskeleton. The protein localises to the endosome membrane. In terms of biological role, GTPase-activating protein for rhoa and cdc42. May be involved in the regulation of neosynthesized protein export through a Rab-endososomal dependent export route. In Xenopus laevis (African clawed frog), this protein is Rho GTPase-activating protein 26 (arhgap26).